The primary structure comprises 151 residues: 3-hydroxyacyl-[acyl-carrier-protein] dehydratase FabZ (151 aa).

His-49 is a catalytic residue.

Belongs to the thioester dehydratase family. FabZ subfamily.

Its subcellular location is the cytoplasm. It carries out the reaction a (3R)-hydroxyacyl-[ACP] = a (2E)-enoyl-[ACP] + H2O. Functionally, involved in unsaturated fatty acids biosynthesis. Catalyzes the dehydration of short chain beta-hydroxyacyl-ACPs and long chain saturated and unsaturated beta-hydroxyacyl-ACPs. This is 3-hydroxyacyl-[acyl-carrier-protein] dehydratase FabZ from Wolinella succinogenes (strain ATCC 29543 / DSM 1740 / CCUG 13145 / JCM 31913 / LMG 7466 / NCTC 11488 / FDC 602W) (Vibrio succinogenes).